Consider the following 492-residue polypeptide: MO25-like protein 3 (492 aa).

The interval 442–492 (SRAGIRFGETRNVKGSPRSRSQSPRPPTGPEPSPRTTSYQNVRFPPEDSSR) is disordered. Residues 465 to 474 (PRPPTGPEPS) are compositionally biased toward pro residues.

This sequence belongs to the Mo25 family.

The protein is MO25-like protein 3 of Caenorhabditis briggsae.